Consider the following 378-residue polypeptide: Probable endopolygalacturonase NFIA_008150 (378 aa).

The first 19 residues, 1–19 (MLKLIGSLVLLASAAEVIA), serve as a signal peptide directing secretion. Residues 20–35 (SPLAESVAPSITLEKR) constitute a propeptide that is removed on maturation. C38 and C56 are joined by a disulfide. PbH1 repeat units follow at residues 147–169 (TSSSSITNLHILNTPVQAVSING), 170–200 (CDGLTVTDMTIDDSAGDTQGGHNTDAFDIGS), and 201–222 (SSNIIISGAKVYNQDDCVAVNS). D215 acts as the Proton donor in catalysis. C217 and C233 form a disulfide bridge. H237 is a catalytic residue. PbH1 repeat units lie at residues 247 to 273 (RSDNTVENVSFTNSQVTKSDNGLRIKA) and 281 to 303 (IKGITYSGITLSSIRKYGILIEQ). N-linked (GlcNAc...) asparagine glycosylation is present at N254. An N-linked (GlcNAc...) asparagine glycan is attached at N327. Disulfide bonds link C345/C350 and C369/C378.

Belongs to the glycosyl hydrolase 28 family.

It localises to the secreted. It carries out the reaction (1,4-alpha-D-galacturonosyl)n+m + H2O = (1,4-alpha-D-galacturonosyl)n + (1,4-alpha-D-galacturonosyl)m.. Its function is as follows. Involved in maceration and soft-rotting of plant tissue. Hydrolyzes the 1,4-alpha glycosidic bonds of de-esterified pectate in the smooth region of the plant cell wall. This chain is Probable endopolygalacturonase NFIA_008150, found in Neosartorya fischeri (strain ATCC 1020 / DSM 3700 / CBS 544.65 / FGSC A1164 / JCM 1740 / NRRL 181 / WB 181) (Aspergillus fischerianus).